The primary structure comprises 382 residues: Saccharopine dehydrogenase [NAD(+), L-lysine-forming] (382 aa).

Residues Arg-20 and Lys-79 each coordinate L-saccharopine. The active-site Proton acceptor is Lys-79. Residue His-98 is the Proton donor of the active site. Position 103 (Gln-103) interacts with L-saccharopine. Position 132 (Arg-132) interacts with NAD(+). The L-saccharopine site is built by Arg-133 and Phe-137. Residues 215–216, Asp-239, Thr-243, Tyr-263, and Val-290 each bind NAD(+); that span reads GR. Cys-217 and Cys-261 are oxidised to a cystine. Position 291–293 (291–293) interacts with L-saccharopine; the sequence is SAD. 330–333 lines the NAD(+) pocket; that stretch reads IDHL.

It belongs to the AlaDH/PNT family. As to quaternary structure, monomer.

The enzyme catalyses L-saccharopine + NAD(+) + H2O = L-lysine + 2-oxoglutarate + NADH + H(+). It functions in the pathway amino-acid biosynthesis; L-lysine biosynthesis via AAA pathway; L-lysine from L-alpha-aminoadipate (fungal route): step 3/3. In terms of biological role, catalyzes the NAD(+)-dependent cleavage of saccharopine to L-lysine and 2-oxoglutarate, the final step in the alpha-aminoadipate (AAA) pathway for lysin biosynthesis. The polypeptide is Saccharopine dehydrogenase [NAD(+), L-lysine-forming] (Candida albicans (strain SC5314 / ATCC MYA-2876) (Yeast)).